Consider the following 266-residue polypeptide: tRNA pseudouridine synthase A (266 aa).

Aspartate 53 functions as the Nucleophile in the catalytic mechanism. Tyrosine 109 lines the substrate pocket.

It belongs to the tRNA pseudouridine synthase TruA family.

The catalysed reaction is uridine(38/39/40) in tRNA = pseudouridine(38/39/40) in tRNA. Formation of pseudouridine at positions 38, 39 and 40 in the anticodon stem and loop of transfer RNAs. This chain is tRNA pseudouridine synthase A, found in Methanocella arvoryzae (strain DSM 22066 / NBRC 105507 / MRE50).